The sequence spans 190 residues: Vascular endothelial growth factor A (190 aa).

A signal peptide spans 1-26 (MNFLLSWVHWSLALLLYLHHAKWSQA). Disulfide bonds link cysteine 51-cysteine 93, cysteine 82-cysteine 127, and cysteine 86-cysteine 129. Residue asparagine 100 is glycosylated (N-linked (GlcNAc...) asparagine).

The protein belongs to the PDGF/VEGF growth factor family. In terms of assembly, homodimer; disulfide-linked. Also found as heterodimer with PGF. Interacts with NRP1. Interacts with isoform 2 of BSG. Interacts with CD82; this interaction inhibits VEGFA-mediated signaling pathway.

Its subcellular location is the secreted. Growth factor active in angiogenesis, vasculogenesis and endothelial cell growth. Induces endothelial cell proliferation, promotes cell migration, inhibits apoptosis and induces permeabilization of blood vessels. Binds to the FLT1/VEGFR1 and KDR/VEGFR2 receptors, heparan sulfate and heparin. Binding to NRP1 receptor initiates a signaling pathway needed for motor neuron axon guidance and cell body migration, including for the caudal migration of facial motor neurons from rhombomere 4 to rhombomere 6 during embryonic development. Also binds the DEAR/FBXW7-AS1 receptor. This Equus caballus (Horse) protein is Vascular endothelial growth factor A (VEGFA).